The following is a 189-amino-acid chain: Accessory gene regulator protein B (189 aa).

The next 5 membrane-spanning stretches (helical) occupy residues 49-69 (IAYILNIFLFTLITNLTFYLI), 81-100 (SFWCYVESIILFILLPLVIV), 110-130 (IILTVISLGVISVYAPAATKK), 143-163 (YYAIIVSLTLFIITLIIKEPF), and 164-184 (AQFIQLGIIIEAITLLPIFFI).

This sequence belongs to the AgrB family.

It is found in the cell membrane. Essential for the production of a quorum sensing system signal molecule, the autoinducing peptide (AIP). This quorum sensing system is responsible for the regulation of the expression of virulence factor genes. Involved in the proteolytic processing of AgrD, the precursor of AIP. The polypeptide is Accessory gene regulator protein B (Staphylococcus aureus (strain COL)).